A 337-amino-acid polypeptide reads, in one-letter code: uncharacterized protein (337 aa).

Residues isoleucine 3 to asparagine 174 form the MurNAc-LAA domain.

It to C.perfringens pIP404 ORF10.

This is an uncharacterized protein from Clostridium perfringens (strain 13 / Type A).